The following is a 39-amino-acid chain: Colipase (39 aa).

2 disulfide bridges follow: Cys-16–Cys-27 and Cys-22–Cys-38.

Belongs to the colipase family. As to quaternary structure, forms a 1:1 stoichiometric complex with pancreatic lipase. In terms of tissue distribution, expressed by the pancreas.

The protein resides in the secreted. Functionally, colipase is a cofactor of pancreatic lipase. It allows the lipase to anchor itself to the lipid-water interface. Without colipase the enzyme is washed off by bile salts, which have an inhibitory effect on the lipase. The sequence is that of Colipase from Squalus acanthias (Spiny dogfish).